We begin with the raw amino-acid sequence, 1449 residues long: DNA polymerase III PolC-type (1449 aa).

The tract at residues 194–231 (AQEKPVKKESSDNKHKSNGGNKGGYEKKSYKDEPKNEN) is disordered. Composition is skewed to basic and acidic residues over residues 197-208 (KPVKKESSDNKH) and 217-229 (GYEK…EPKN). Residues 435 to 590 (YVVFDIETTG…DDAKATAEIL (156 aa)) form the Exonuclease domain.

Belongs to the DNA polymerase type-C family. PolC subfamily.

The protein resides in the cytoplasm. The catalysed reaction is DNA(n) + a 2'-deoxyribonucleoside 5'-triphosphate = DNA(n+1) + diphosphate. Required for replicative DNA synthesis. This DNA polymerase also exhibits 3' to 5' exonuclease activity. The polypeptide is DNA polymerase III PolC-type (Clostridium perfringens (strain 13 / Type A)).